A 305-amino-acid polypeptide reads, in one-letter code: Ribonuclease Z (305 aa).

7 residues coordinate Zn(2+): His63, His65, Asp67, His68, His142, Asp209, and His267. The active-site Proton acceptor is the Asp67.

Belongs to the RNase Z family. In terms of assembly, homodimer. It depends on Zn(2+) as a cofactor.

It carries out the reaction Endonucleolytic cleavage of RNA, removing extra 3' nucleotides from tRNA precursor, generating 3' termini of tRNAs. A 3'-hydroxy group is left at the tRNA terminus and a 5'-phosphoryl group is left at the trailer molecule.. Functionally, zinc phosphodiesterase, which displays some tRNA 3'-processing endonuclease activity. Probably involved in tRNA maturation, by removing a 3'-trailer from precursor tRNA. The chain is Ribonuclease Z from Nocardia farcinica (strain IFM 10152).